Here is a 483-residue protein sequence, read N- to C-terminus: tRNA sulfurtransferase (483 aa).

One can recognise a THUMP domain in the interval 61 to 165 (EAVCDALTRI…DDKLILVNAR (105 aa)). Residues 183–184 (LI), K265, G287, and Q296 contribute to the ATP site. An intrachain disulfide couples C344 to C456. The 80-residue stretch at 404–483 (FATNDVVLDI…FNNVKVYRKK (80 aa)) folds into the Rhodanese domain. C456 functions as the Cysteine persulfide intermediate in the catalytic mechanism.

The protein belongs to the ThiI family.

The protein resides in the cytoplasm. It carries out the reaction [ThiI sulfur-carrier protein]-S-sulfanyl-L-cysteine + a uridine in tRNA + 2 reduced [2Fe-2S]-[ferredoxin] + ATP + H(+) = [ThiI sulfur-carrier protein]-L-cysteine + a 4-thiouridine in tRNA + 2 oxidized [2Fe-2S]-[ferredoxin] + AMP + diphosphate. The enzyme catalyses [ThiS sulfur-carrier protein]-C-terminal Gly-Gly-AMP + S-sulfanyl-L-cysteinyl-[cysteine desulfurase] + AH2 = [ThiS sulfur-carrier protein]-C-terminal-Gly-aminoethanethioate + L-cysteinyl-[cysteine desulfurase] + A + AMP + 2 H(+). The protein operates within cofactor biosynthesis; thiamine diphosphate biosynthesis. Functionally, catalyzes the ATP-dependent transfer of a sulfur to tRNA to produce 4-thiouridine in position 8 of tRNAs, which functions as a near-UV photosensor. Also catalyzes the transfer of sulfur to the sulfur carrier protein ThiS, forming ThiS-thiocarboxylate. This is a step in the synthesis of thiazole, in the thiamine biosynthesis pathway. The sulfur is donated as persulfide by IscS. This Proteus mirabilis (strain HI4320) protein is tRNA sulfurtransferase.